We begin with the raw amino-acid sequence, 3680 residues long: Dystrophin (3680 aa).

An actin-binding region spans residues 1–237; sequence MLWWEEVEDC…ILMYITSLFQ (237 aa). Calponin-homology (CH) domains lie at 15–119 and 134–240; these read DVQK…LHWQ and TNSE…QVLP. Residues 63-72 form an ANK2- and ANK-3 binding region; sequence PKEKGSTRVH. Residues 310–323 are compositionally biased toward polar residues; that stretch reads TSDPTRSPLPSQHL. The interval 310–332 is disordered; that stretch reads TSDPTRSPLPSQHLETPEDKSFG. 24 Spectrin repeats span residues 340–448, 449–557, 560–668, 720–829, 831–935, 944–1047, 1050–1156, 1159–1265, 1268–1369, 1370–1465, 1470–1570, 1573–1678, 1681–1780, 1781–1876, 1879–1981, 1994–2103, 2106–2210, 2213–2320, 2321–2418, 2470–2572, 2575–2681, 2684–2797, 2803–2925, and 2930–3035; these read ANLD…NLHK, VLMD…LLQD, LKWQ…QISQ, EIRK…WLEY, NNII…ELQT, RYQE…KLEE, AKLR…ALKG, DKTV…TLEE, ACWH…LLEQ, SIQS…LFQK, EQRL…QLEK, KLSR…LLLE, KHME…KASI, PLKE…KALE, HQWY…TVHE, EISY…RFDR, EKWR…RLEE, NILS…EIEA, HVKD…LRAK, FNRA…QLTE, KDST…ALEE, RLLQ…HLEA, KRLH…RKID, and RLQE…QLHE. An interaction with SYNM region spans residues 1418-1915; sequence DLTSHEISLE…PEPRDERKIK (498 aa). Residues 3050–3083 form the WW domain; the sequence is TSVQGPWERAISPNKVPYYINHETQTTCWDHPKM. The interval 3053-3403 is interaction with SYNM; sequence QGPWERAISP…TVLEGDNMET (351 aa). The ZZ-type; degenerate zinc finger occupies 3303–3359; sequence KHQAKCNICKECPIIGFRYRSLKHFNYDICQSCFFSGRVAKGHKMHYPMVEYCTPTT. Cysteine 3308, cysteine 3311, cysteine 3332, and cysteine 3335 together coordinate Zn(2+). Positions 3461–3513 are binds to SNTB1; sequence DDEHLLIQHYWRSLNQESPLSQPRSPAQILISLESEERGELERILADLEGRNR. Serine 3478, serine 3485, and serine 3495 each carry phosphoserine. Disordered regions lie at residues 3524-3549 and 3595-3680; these read QQHEHKGLSPLPSPPEMMPTSPQSPR and PQAE…EDTM. 2 stretches are compositionally biased toward polar residues: residues 3602–3621 and 3658–3668; these read NGTTVSSPSTSLQRSDSSQP and LNHSFPSSRGR. Residues serine 3607, serine 3608, serine 3612, serine 3618, serine 3619, and serine 3661 each carry the phosphoserine modification.

In terms of assembly, interacts with SYNM. Interacts with the syntrophins SNTG1 and SNTG2. Interacts with KRT19. Component of the dystrophin-associated glycoprotein complex which is composed of three subcomplexes: a cytoplasmic complex comprised of DMD (or UTRN), DTNA and a number of syntrophins, such as SNTB1, SNTB2, SNTG1 and SNTG2, the transmembrane dystroglycan complex, and the sarcoglycan-sarcospan complex. Interacts with DAG1 (betaDAG1) with DMD; the interaction is inhibited by phosphorylation on the PPXY motif of DAG1. Interacts with SYNM; SNTA1 and SNTB1. Interacts with CMYA5. Directly interacts with ANK2 and ANK3; these interactions do not interfere with betaDAG1-binding and are necessary for proper localization in muscle cells. Identified in a dystroglycan complex that contains at least PRX, DRP2, UTRN, DMD and DAG1. Interacts with DTNB. Interacts with PGM5; the interaction is direct. Interacts with NOS1; localizes NOS1 to sarcolemma in muscle cells.

The protein localises to the cell membrane. It localises to the sarcolemma. It is found in the cytoplasm. Its subcellular location is the cytoskeleton. The protein resides in the postsynaptic cell membrane. Anchors the extracellular matrix to the cytoskeleton via F-actin. Ligand for dystroglycan. Component of the dystrophin-associated glycoprotein complex which accumulates at the neuromuscular junction (NMJ) and at a variety of synapses in the peripheral and central nervous systems and has a structural function in stabilizing the sarcolemma. Also implicated in signaling events and synaptic transmission. The protein is Dystrophin (DMD) of Canis lupus familiaris (Dog).